The following is a 239-amino-acid chain: Small ribosomal subunit protein uS3 (239 aa).

Positions 39–107 (VRQVLRKKMS…SVHINVIEVR (69 aa)) constitute a KH type-2 domain. The disordered stretch occupies residues 217 to 239 (KQDDISRGDRNADRSSRRSREVR).

It belongs to the universal ribosomal protein uS3 family. In terms of assembly, part of the 30S ribosomal subunit. Forms a tight complex with proteins S10 and S14.

Its function is as follows. Binds the lower part of the 30S subunit head. Binds mRNA in the 70S ribosome, positioning it for translation. The protein is Small ribosomal subunit protein uS3 of Xylella fastidiosa (strain 9a5c).